We begin with the raw amino-acid sequence, 318 residues long: Type II restriction enzyme HaeIII (318 aa).

The enzyme catalyses Endonucleolytic cleavage of DNA to give specific double-stranded fragments with terminal 5'-phosphates.. In terms of biological role, a P subtype restriction enzyme that recognizes the double-stranded sequence 5'-GGCC-3' and cleaves after G-2. The sequence is that of Type II restriction enzyme HaeIII (haeIIIR) from Haemophilus aegyptius.